The following is a 261-amino-acid chain: tRNA U34 carboxymethyltransferase (261 aa).

Carboxy-S-adenosyl-L-methionine is bound by residues Lys-25, Trp-39, Lys-44, Gly-63, 114–115 (VE), Tyr-135, and Arg-250.

It belongs to the class I-like SAM-binding methyltransferase superfamily. CmoB family. As to quaternary structure, homotetramer.

The enzyme catalyses carboxy-S-adenosyl-L-methionine + 5-hydroxyuridine(34) in tRNA = 5-carboxymethoxyuridine(34) in tRNA + S-adenosyl-L-homocysteine + H(+). In terms of biological role, catalyzes carboxymethyl transfer from carboxy-S-adenosyl-L-methionine (Cx-SAM) to 5-hydroxyuridine (ho5U) to form 5-carboxymethoxyuridine (cmo5U) at position 34 in tRNAs. This chain is tRNA U34 carboxymethyltransferase, found in Helicobacter pylori (strain G27).